We begin with the raw amino-acid sequence, 346 residues long: NADH-ubiquinone oxidoreductase chain 2 (346 aa).

11 helical membrane passes run 3–23 (PLIFTTILMTVLLGTMIVMMS), 25–45 (HWLMIWIGFEMNLLAIIPILM), 59–79 (YFLTQATASMLLMMAIIINLM), 96–116 (IIMTSALAMKLGLTPFHFWVP), 122–142 (ISLTSGLILLTWQKLAPMSIL), 149–169 (INLNILLTMAVLSILVGGWGG), 178–198 (IMAYSSIAHMGWMTAVLVYNP), 200–220 (LTMLNMLIYIMMTLTMFMLFI), 242–262 (TLILITLLSMGGLPPLSGFMP), 274–294 (SSIILPTLMAIMALLNLYFYM), and 322–342 (ITLLPPLIVMSSLLLPLTPML).

Belongs to the complex I subunit 2 family. In terms of assembly, core subunit of respiratory chain NADH dehydrogenase (Complex I) which is composed of 45 different subunits. Interacts with TMEM242.

The protein localises to the mitochondrion inner membrane. The enzyme catalyses a ubiquinone + NADH + 5 H(+)(in) = a ubiquinol + NAD(+) + 4 H(+)(out). Its function is as follows. Core subunit of the mitochondrial membrane respiratory chain NADH dehydrogenase (Complex I) which catalyzes electron transfer from NADH through the respiratory chain, using ubiquinone as an electron acceptor. Essential for the catalytic activity and assembly of complex I. The sequence is that of NADH-ubiquinone oxidoreductase chain 2 from Equus caballus (Horse).